Here is a 334-residue protein sequence, read N- to C-terminus: L-lactate dehydrogenase C chain (334 aa).

NAD(+)-binding positions include 30–58 (GQVGMACAVTILLRELADELALVDVVEDK) and Arg100. Residues Arg107, Asn139, and Arg170 each contribute to the substrate site. Asn139 contributes to the NAD(+) binding site. The active-site Proton acceptor is His194. Residue Thr249 coordinates substrate.

This sequence belongs to the LDH/MDH superfamily. LDH family. In terms of assembly, homotetramer. As to expression, eye and liver.

Its subcellular location is the cytoplasm. It carries out the reaction (S)-lactate + NAD(+) = pyruvate + NADH + H(+). It functions in the pathway fermentation; pyruvate fermentation to lactate; (S)-lactate from pyruvate: step 1/1. The protein is L-lactate dehydrogenase C chain (ldhc) of Fundulus heteroclitus (Killifish).